A 209-amino-acid chain; its full sequence is Thiamine-phosphate synthase (209 aa).

4-amino-2-methyl-5-(diphosphooxymethyl)pyrimidine is bound by residues 35 to 39 (QLRNK) and N67. Residues D68 and D87 each coordinate Mg(2+). S106 is a 4-amino-2-methyl-5-(diphosphooxymethyl)pyrimidine binding site. 2-[(2R,5Z)-2-carboxy-4-methylthiazol-5(2H)-ylidene]ethyl phosphate is bound at residue 132–134 (TGS). K135 is a 4-amino-2-methyl-5-(diphosphooxymethyl)pyrimidine binding site. 2-[(2R,5Z)-2-carboxy-4-methylthiazol-5(2H)-ylidene]ethyl phosphate is bound by residues G163 and 183 to 184 (IS).

Belongs to the thiamine-phosphate synthase family. It depends on Mg(2+) as a cofactor.

The enzyme catalyses 2-[(2R,5Z)-2-carboxy-4-methylthiazol-5(2H)-ylidene]ethyl phosphate + 4-amino-2-methyl-5-(diphosphooxymethyl)pyrimidine + 2 H(+) = thiamine phosphate + CO2 + diphosphate. It carries out the reaction 2-(2-carboxy-4-methylthiazol-5-yl)ethyl phosphate + 4-amino-2-methyl-5-(diphosphooxymethyl)pyrimidine + 2 H(+) = thiamine phosphate + CO2 + diphosphate. It catalyses the reaction 4-methyl-5-(2-phosphooxyethyl)-thiazole + 4-amino-2-methyl-5-(diphosphooxymethyl)pyrimidine + H(+) = thiamine phosphate + diphosphate. Its pathway is cofactor biosynthesis; thiamine diphosphate biosynthesis; thiamine phosphate from 4-amino-2-methyl-5-diphosphomethylpyrimidine and 4-methyl-5-(2-phosphoethyl)-thiazole: step 1/1. Its function is as follows. Condenses 4-methyl-5-(beta-hydroxyethyl)thiazole monophosphate (THZ-P) and 2-methyl-4-amino-5-hydroxymethyl pyrimidine pyrophosphate (HMP-PP) to form thiamine monophosphate (TMP). The chain is Thiamine-phosphate synthase from Chlorobium phaeovibrioides (strain DSM 265 / 1930) (Prosthecochloris vibrioformis (strain DSM 265)).